Reading from the N-terminus, the 1593-residue chain is Nischarin (1593 aa).

A necessary for binding to phosphoinositide-3-P; not sufficient for targeting to endosomes region spans residues 1–134 (MAAATLSFGP…GVTAALAEEL (134 aa)). The region spanning 12-122 (REAEPAKEAR…AHFLHFHLYE (111 aa)) is the PX domain. Residues 121-695 (YEVNGVTAAL…ERLALEWALG (575 aa)) form a necessary for homooligomerization and targeting to endosomes region. The segment at 246 to 869 (MSVRFSATSM…LVYSDKRMVQ (624 aa)) is interaction with PAK1. 6 LRR repeats span residues 290-311 (ALTT…VKLI), 313-334 (KIEY…QHLY), 335-356 (NLVH…HTKL), 358-379 (NVKT…HKLY), 380-401 (SLVN…KSIG), and 405-426 (CLER…RTKV). Basic and acidic residues predominate over residues 466 to 480 (SKLSNTEKKAGEDFR). Residues 466 to 499 (SKLSNTEKKAGEDFRLPPAPCIRPGGSPPAAPAS) are disordered. The span at 482 to 496 (PPAPCIRPGGSPPAA) shows a compositional bias: pro residues. Phosphoserine occurs at positions 543, 545, and 548. The stretch at 624-694 (IEAANQREEA…EERLALEWAL (71 aa)) forms a coiled coil. The interval 629 to 687 (QREEAHGEQGEEEEEEEEEEDVAENRYFEMGPPDAEEEEGSGQGEEDEEDEDEEAEEER) is disordered. 2 stretches are compositionally biased toward acidic residues: residues 638 to 650 (GEEE…EEDV) and 662 to 685 (DAEE…EAEE). The tract at residues 661-869 (PDAEEEEGSG…LVYSDKRMVQ (209 aa)) is interaction with LIMK. The segment at 709–807 (KVLWCFLIHV…ANLHEFHADL (99 aa)) is interaction with ITGA5. The interval 1016-1185 (NPSAKPRNQP…PAGGPAPAEA (170 aa)) is disordered. 2 stretches are compositionally biased toward low complexity: residues 1038–1069 (ETPA…LAPV) and 1081–1158 (AEAP…APAP). 10 tandem repeats follow at residues 1081 to 1086 (AEAPAA), 1087 to 1092 (AEAPAA), 1093 to 1098 (AEAPAA), 1099 to 1104 (AEAPAA), 1105 to 1110 (AEAPAA), 1111 to 1116 (AEAPAA), 1123 to 1128 (AEAPAA), 1129 to 1134 (AEAPAA), 1135 to 1140 (AEAPAA), and 1141 to 1146 (AEAPAA). The interval 1081 to 1146 (AEAPAAAEAP…APAAAEAPAA (66 aa)) is 10 X 6 AA tandem repeat of A-E-A-P-A-A. The segment covering 1159–1179 (NQAPAPARGPAPARGPAPAGG) has biased composition (pro residues). Position 1371 is a phosphothreonine (Thr-1371). At Ser-1373 the chain carries Phosphoserine.

As to quaternary structure, homooligomer. Interacts with GRB2. Interacts with PIK3R1; probably associates with the PI3-kinase complex. Interacts with IRS4. Found in a complex with ITGA5 and PAK1. Found in a complex with LIMK1 and PAK1. Interacts with ITGA5 (via cytoplasmic domain); this interaction is direct. Interacts with PAK1 (via kinase domain); this interaction is direct and is increased upon activation of PAK1. Interacts with LIMK1 (via PDZ and kinase domain); this interaction is direct. Interacts with LIMK2; this interaction depends on LIMK2 activity. Interacts with RAC1 (activated state). Interacts with STK11; this interaction may increase STK11 activity. As to expression, highly expressed in brain and kidney. Moderately expressed in heart, liver, lung and skeletal muscle. Not detected in spleen and testis.

It localises to the cell membrane. The protein localises to the cytoplasm. Its subcellular location is the early endosome. It is found in the recycling endosome. Its function is as follows. Acts either as the functional imidazoline-1 receptor (I1R) candidate or as a membrane-associated mediator of the I1R signaling. Binds numerous imidazoline ligands that induces initiation of cell-signaling cascades triggering to cell survival, growth and migration. Its activation by the agonist rilmenidine induces an increase in phosphorylation of mitogen-activated protein kinases MAPK1 and MAPK3 in rostral ventrolateral medulla (RVLM) neurons that exhibited rilmenidine-evoked hypotension. Blocking its activation with efaroxan abolished rilmenidine-induced mitogen-activated protein kinase phosphorylation in RVLM neurons. Acts as a modulator of Rac-regulated signal transduction pathways. Suppresses Rac1-stimulated cell migration by interacting with PAK1 and inhibiting its kinase activity. Also blocks Pak-independent Rac signaling by interacting with RAC1 and inhibiting Rac1-stimulated NF-kB response element and cyclin D1 promoter activation. Also inhibits LIMK1 kinase activity by reducing LIMK1 'Tyr-508' phosphorylation. Inhibits Rac-induced cell migration and invasion in breast and colon epithelial cells. Inhibits lamellipodia formation, when overexpressed. Plays a role in protection against apoptosis. Involved in association with IRS4 in the enhancement of insulin activation of MAPK1 and MAPK3. When overexpressed, induces a redistribution of cell surface ITGA5 integrin to intracellular endosomal structures. The polypeptide is Nischarin (Nisch) (Mus musculus (Mouse)).